The chain runs to 305 residues: Alpha-N-acetylgalactosaminide alpha-2,6-sialyltransferase 3 (305 aa).

The Cytoplasmic portion of the chain corresponds to 1–8 (MACILKRK). The chain crosses the membrane as a helical; Signal-anchor for type II membrane protein span at residues 9-28 (PVLVVSFIALCILLLAMRLV). Residues 29–305 (NDATFPLLLN…VFTHPNWTLS (277 aa)) lie on the Lumenal side of the membrane. Residues cysteine 80 and cysteine 229 are joined by a disulfide bond. N-linked (GlcNAc...) asparagine glycosylation is found at asparagine 239 and asparagine 301.

It belongs to the glycosyltransferase 29 family. As to expression, in adult tissues, high expression in brain, lung and heart and to a lesser extent in kidney, mammary gland, spleen, testis and thymus.

It is found in the golgi apparatus membrane. It catalyses the reaction an alpha-Neu5Ac-(2-&gt;3)-beta-D-Gal-(1-&gt;3)-D-GlcNAc derivative + CMP-N-acetyl-beta-neuraminate = an alpha-Neu5Ac-(2-&gt;3)-beta-D-Gal-(1-&gt;3)-[alpha-Neu5Ac-(2-&gt;6)]-D-GlcNAc derivative + CMP + H(+). The enzyme catalyses a ganglioside GM1b (d18:1(4E)) + CMP-N-acetyl-beta-neuraminate = a ganglioside GD1alpha (d18:1(4E)) + CMP + H(+). It carries out the reaction a globoside MSGG + CMP-N-acetyl-beta-neuraminate = a globoside DSGG + CMP + H(+). The catalysed reaction is 3-O-[alpha-Neu5Ac-(2-&gt;3)-beta-D-Gal-(1-&gt;3)-alpha-D-GalNAc]-L-Ser-[protein] + CMP-N-acetyl-beta-neuraminate = a 3-O-{alpha-Neu5Ac-(2-&gt;3)-beta-D-Gal-(1-&gt;3)-[alpha-Neu5Ac-(2-&gt;6)]-alpha-D-GalNAc}-L-seryl-[protein] + CMP + H(+). It catalyses the reaction 3-O-[alpha-Neu5Ac-(2-&gt;3)-beta-D-Gal-(1-&gt;3)-alpha-D-GalNAc]-L-Thr-[protein] + CMP-N-acetyl-beta-neuraminate = a 3-O-{alpha-Neu5Ac-(2-&gt;3)-beta-D-Gal-(1-&gt;3)-[alpha-Neu5Ac-(2-&gt;6)]-alpha-D-GalNAc}-L-threonyl-[protein] + CMP + H(+). The protein operates within protein modification; protein glycosylation. It participates in glycolipid biosynthesis. In terms of biological role, transfers the sialyl group (N-acetyl-alpha-neuraminyl or NeuAc) from CMP-NeuAc to the GalNAc residue on the NeuAc-alpha-2,3-Gal-beta-1,3-GalNAc sequence of glycoproteins and glycolipids forming an alpha-2,6-linkage. Produces branched type disialyl structures by transfer of a sialyl group onto a GalNAc residue inside the backbone core chains. ST6GalNAcIII prefers glycolipids to glycoproteins, predominantly catalyzing the biosynthesis of ganglioside GD1alpha from GM1b. GD1alpha is a critical molecule in the communication and interaction between neuronal cells and their supportive cells, particularly in brain tissues, and functions as an adhesion molecule in the process of metastasis. Sialylation of glycoproteins or glycosphingolipids is very important in tumor development, neuronal development, nerve repair, immunological processes and regulation of hormone sensitivity. The protein is Alpha-N-acetylgalactosaminide alpha-2,6-sialyltransferase 3 (St6galnac3) of Mus musculus (Mouse).